A 360-amino-acid chain; its full sequence is DNA polymerase IV (360 aa).

The region spanning 8 to 189 (IIHVDMDCFF…LPLEKIPGVG (182 aa)) is the UmuC domain. D12 and D107 together coordinate Mg(2+). Residue E108 is part of the active site.

This sequence belongs to the DNA polymerase type-Y family. Monomer. The cofactor is Mg(2+).

It localises to the cytoplasm. It carries out the reaction DNA(n) + a 2'-deoxyribonucleoside 5'-triphosphate = DNA(n+1) + diphosphate. In terms of biological role, poorly processive, error-prone DNA polymerase involved in untargeted mutagenesis. Copies undamaged DNA at stalled replication forks, which arise in vivo from mismatched or misaligned primer ends. These misaligned primers can be extended by PolIV. Exhibits no 3'-5' exonuclease (proofreading) activity. May be involved in translesional synthesis, in conjunction with the beta clamp from PolIII. This chain is DNA polymerase IV, found in Vibrio cholerae serotype O1 (strain ATCC 39541 / Classical Ogawa 395 / O395).